We begin with the raw amino-acid sequence, 504 residues long: Chorion-specific transcription factor GCMb (504 aa).

A DNA-binding region (GCM) is located at residues 19-174; that stretch reads LTWDINDPQM…KSETEGRRSA (156 aa). Zn(2+) contacts are provided by C81, C87, C91, C118, C121, C130, H157, and H159. Composition is skewed to basic and acidic residues over residues 155–172 and 188–203; these read GVHD…EGRR and RRSE…DIRG. The interval 155 to 203 is disordered; it reads GVHDHPRPESKSETEGRRSALKRQMASFYQPQKRRSEEPEARSTQDIRG. Residues 379–393 are C-terminal conserved inhibitory domain (CCID); sequence LQTVITTTVAYQAYQ. The interval 438 to 472 is disordered; that stretch reads ASPSGRAPLKVPGDCQAPRPTLDFPQEADPSGTDG.

It localises to the nucleus. Functionally, transcription factor that binds specific sequences on gene promoters and activate their transcription. Through the regulation of gene transcription, may play a role in parathyroid gland development. In Mus musculus (Mouse), this protein is Chorion-specific transcription factor GCMb.